The following is a 529-amino-acid chain: Peptide chain release factor 3 (529 aa).

Residues alanine 11 to methionine 280 form the tr-type G domain. Residues serine 20–threonine 27, aspartate 88–histidine 92, and asparagine 142–aspartate 145 each bind GTP.

Belongs to the TRAFAC class translation factor GTPase superfamily. Classic translation factor GTPase family. PrfC subfamily.

Its subcellular location is the cytoplasm. Its function is as follows. Increases the formation of ribosomal termination complexes and stimulates activities of RF-1 and RF-2. It binds guanine nucleotides and has strong preference for UGA stop codons. It may interact directly with the ribosome. The stimulation of RF-1 and RF-2 is significantly reduced by GTP and GDP, but not by GMP. In Salmonella agona (strain SL483), this protein is Peptide chain release factor 3.